We begin with the raw amino-acid sequence, 268 residues long: 5'-nucleotidase SurE (268 aa).

A divalent metal cation is bound by residues Asp-8, Asp-9, Ser-40, and Asn-98.

It belongs to the SurE nucleotidase family. A divalent metal cation serves as cofactor.

The protein localises to the cytoplasm. It catalyses the reaction a ribonucleoside 5'-phosphate + H2O = a ribonucleoside + phosphate. Nucleotidase that shows phosphatase activity on nucleoside 5'-monophosphates. This is 5'-nucleotidase SurE from Trichodesmium erythraeum (strain IMS101).